Reading from the N-terminus, the 327-residue chain is Phenylalanine--tRNA ligase alpha subunit (327 aa).

Glutamate 252 is a binding site for Mg(2+).

Belongs to the class-II aminoacyl-tRNA synthetase family. Phe-tRNA synthetase alpha subunit type 1 subfamily. As to quaternary structure, tetramer of two alpha and two beta subunits. Requires Mg(2+) as cofactor.

It localises to the cytoplasm. It catalyses the reaction tRNA(Phe) + L-phenylalanine + ATP = L-phenylalanyl-tRNA(Phe) + AMP + diphosphate + H(+). This is Phenylalanine--tRNA ligase alpha subunit from Hamiltonella defensa subsp. Acyrthosiphon pisum (strain 5AT).